The following is an 816-amino-acid chain: Homeobox-leucine zipper protein ROC9 (816 aa).

The segment at 26-104 is disordered; sequence VFGRKNGPAA…RRKNYHRHTA (79 aa). A compositionally biased stretch (basic residues) spans 92–101; the sequence is KKRRRKNYHR. Residues 95–154 constitute a DNA-binding region (homeobox); that stretch reads RRKNYHRHTAEQIRIMEALFKESPHPDERQRQQVSKQLGLSARQVKFWFQNRRTQIKAVQ. Residues 149–182 are a coiled coil; the sequence is QIKAVQERHENSLLKSELEKLQDEHRAMRELAKK. The interval 265-296 is disordered; sequence KSAADGIASPPCSASAGAMQTNSRSPPLHDHD. The region spanning 302–541 is the START domain; that stretch reads HDDDKPRILE…LQLQCERMVF (240 aa).

Belongs to the HD-ZIP homeobox family. Class IV subfamily.

It is found in the nucleus. In terms of biological role, probable transcription factor. The sequence is that of Homeobox-leucine zipper protein ROC9 (ROC9) from Oryza sativa subsp. japonica (Rice).